A 128-amino-acid chain; its full sequence is Large ribosomal subunit protein eL32 (128 aa).

This sequence belongs to the eukaryotic ribosomal protein eL32 family.

The polypeptide is Large ribosomal subunit protein eL32 (rpl32e) (Thermoplasma volcanium (strain ATCC 51530 / DSM 4299 / JCM 9571 / NBRC 15438 / GSS1)).